A 121-amino-acid chain; its full sequence is Large ribosomal subunit protein bL12 (121 aa).

Belongs to the bacterial ribosomal protein bL12 family. Homodimer. Part of the ribosomal stalk of the 50S ribosomal subunit. Forms a multimeric L10(L12)X complex, where L10 forms an elongated spine to which 2 to 4 L12 dimers bind in a sequential fashion. Binds GTP-bound translation factors.

In terms of biological role, forms part of the ribosomal stalk which helps the ribosome interact with GTP-bound translation factors. Is thus essential for accurate translation. The protein is Large ribosomal subunit protein bL12 of Tolumonas auensis (strain DSM 9187 / NBRC 110442 / TA 4).